The following is a 248-amino-acid chain: Aquaporin TIP2-3 (248 aa).

Helical transmembrane passes span 20-40 and 54-74; these read AYVAEFIATLLFVFAGVGSAI and AGLVAIAIAHAFALFVGVSMA. Positions 83-85 match the NPA 1 motif; that stretch reads NPA. Helical transmembrane passes span 97–119, 141–161, and 168–188; these read TILTGILYWVAQLLGASVACFLL, GVVMEIVITFALVYTVYATAA, and LGTIAPMAIGFIVGANILAAG. Residues 196–198 carry the NPA 2 motif; it reads NPA. Residues 217–237 form a helical membrane-spanning segment; that stretch reads WVGPLVGGGLAGLVYGDVFIA.

The protein belongs to the MIP/aquaporin (TC 1.A.8) family. TIP (TC 1.A.8.10) subfamily. As to expression, specifically expressed in roots.

The protein localises to the cell membrane. Water channel required to facilitate the transport of water across cell membrane. This is Aquaporin TIP2-3 (TIP2-3) from Zea mays (Maize).